We begin with the raw amino-acid sequence, 201 residues long: Glycerol-3-phosphate acyltransferase (201 aa).

5 helical membrane passes run 5 to 25 (LLGA…FGVV), 55 to 75 (KMGV…ILVA), 87 to 107 (FWVT…VWLG), 118 to 138 (LGIF…GYAV), and 164 to 184 (TYGP…LIFV).

Belongs to the PlsY family. As to quaternary structure, probably interacts with PlsX.

Its subcellular location is the cell inner membrane. It carries out the reaction an acyl phosphate + sn-glycerol 3-phosphate = a 1-acyl-sn-glycero-3-phosphate + phosphate. It functions in the pathway lipid metabolism; phospholipid metabolism. Its function is as follows. Catalyzes the transfer of an acyl group from acyl-phosphate (acyl-PO(4)) to glycerol-3-phosphate (G3P) to form lysophosphatidic acid (LPA). This enzyme utilizes acyl-phosphate as fatty acyl donor, but not acyl-CoA or acyl-ACP. This is Glycerol-3-phosphate acyltransferase from Anaeromyxobacter dehalogenans (strain 2CP-1 / ATCC BAA-258).